Consider the following 274-residue polypeptide: NADPH-dependent 7-cyano-7-deazaguanine reductase (274 aa).

Residue 80–82 (VES) coordinates substrate. 82–83 (SK) is an NADPH binding site. The active-site Thioimide intermediate is the Cys181. The active-site Proton donor is Asp188. Residue 220 to 221 (HE) coordinates substrate. 249-250 (RG) provides a ligand contact to NADPH.

This sequence belongs to the GTP cyclohydrolase I family. QueF type 2 subfamily. In terms of assembly, homodimer.

The protein localises to the cytoplasm. The enzyme catalyses 7-aminomethyl-7-carbaguanine + 2 NADP(+) = 7-cyano-7-deazaguanine + 2 NADPH + 3 H(+). It functions in the pathway tRNA modification; tRNA-queuosine biosynthesis. In terms of biological role, catalyzes the NADPH-dependent reduction of 7-cyano-7-deazaguanine (preQ0) to 7-aminomethyl-7-deazaguanine (preQ1). The protein is NADPH-dependent 7-cyano-7-deazaguanine reductase of Paraburkholderia phytofirmans (strain DSM 17436 / LMG 22146 / PsJN) (Burkholderia phytofirmans).